The sequence spans 238 residues: MIKLFICQKKYYLTAIFLLTIQSCASVEYKPLVTGATTAIAPNIWPKVVNGSLFQEKIPINYGYQPLFEDHRPHNIGDTITVVLQENISASNSSISNMSRDGSANFGLKIAPGQLNNILGVNFQDNTTSLDSFGRNNFSGKGSNSANNKFTGLITVTVKRVLPNGNLKVIGEKQVSINKGTEFIRFSGVINPTNINKNNFISSTQIADARIEYLSHGGLDDVQKMGWLQKLLLKISPI.

The signal sequence occupies residues methionine 1–serine 23. Cysteine 24 is lipidated: N-palmitoyl cysteine. Residue cysteine 24 is the site of S-diacylglycerol cysteine attachment.

This sequence belongs to the FlgH family. In terms of assembly, the basal body constitutes a major portion of the flagellar organelle and consists of four rings (L,P,S, and M) mounted on a central rod.

The protein resides in the cell outer membrane. It is found in the bacterial flagellum basal body. Assembles around the rod to form the L-ring and probably protects the motor/basal body from shearing forces during rotation. The polypeptide is Flagellar L-ring protein (Buchnera aphidicola subsp. Acyrthosiphon pisum (strain 5A)).